The following is a 247-amino-acid chain: DNA polymerase sliding clamp (247 aa).

The protein belongs to the PCNA family. In terms of assembly, homotrimer. The subunits circularize to form a toroid; DNA passes through its center. Replication factor C (RFC) is required to load the toroid on the DNA.

Its function is as follows. Sliding clamp subunit that acts as a moving platform for DNA processing. Responsible for tethering the catalytic subunit of DNA polymerase and other proteins to DNA during high-speed replication. This Halobacterium salinarum (strain ATCC 29341 / DSM 671 / R1) protein is DNA polymerase sliding clamp.